Here is a 331-residue protein sequence, read N- to C-terminus: Type 2 lactosamine alpha-2,3-sialyltransferase (331 aa).

The Cytoplasmic portion of the chain corresponds to 1–4 (MRGY). A helical; Signal-anchor for type II membrane protein transmembrane segment spans residues 5–25 (LVAIFLSAVFLYYVLHCILWG). The Lumenal portion of the chain corresponds to 26-331 (TNVYWVAPVE…KNLVINLTQD (306 aa)). N-linked (GlcNAc...) asparagine glycans are attached at residues N129, N181, N282, N295, N308, and N327.

This sequence belongs to the glycosyltransferase 29 family.

The protein localises to the golgi apparatus membrane. It carries out the reaction a neolactoside nLc4Cer(d18:1(4E)) + CMP-N-acetyl-beta-neuraminate = a neolactoside IV(3)-alpha-NeuAc-nLc4Cer(d18:1(4E)) + CMP + H(+). The catalysed reaction is a beta-D-galactosyl-(1-&gt;4)-N-acetyl-beta-D-glucosaminyl derivative + CMP-N-acetyl-beta-neuraminate = an N-acetyl-alpha-neuraminyl-(2-&gt;3)-beta-D-galactosyl-(1-&gt;4)-N-acetyl-beta-D-glucosaminyl derivative + CMP + H(+). It catalyses the reaction a neolactoside nLc6Cer(d18:1(4E)) + CMP-N-acetyl-beta-neuraminate = a neolactoside VI(3)-alpha-NeuNAc-nLc6Cer(d18:1(4E)) + CMP + H(+). In terms of biological role, transfers the sialyl residue from CMP-N-acetyl-beta-neuraminate to the terminal galactose residue on sugar chains of glycoproteins and glycolipids. It's alpha-2,3-sialyltransferase activity is specific toward type II glycan chains (Galbeta1-4GlcNAc) on glycoproteins and glycolipids such as neolactosides nLc4Cer and nLc6Cer, whose sialyl-products serve as precursors for the Lewis X antigen. Critically involved in the synthesis of functional selectin ligands needed for neutrophil recruitment during inflammation and lymphocyte homing to the lymph nodes. In Pan troglodytes (Chimpanzee), this protein is Type 2 lactosamine alpha-2,3-sialyltransferase (ST3GAL6).